The primary structure comprises 713 residues: Probable glutamate carboxypeptidase VP8 (713 aa).

Over 1–10 (MPHSVLARLP) the chain is Cytoplasmic. The helical; Signal-anchor for type II membrane protein transmembrane segment at 11-31 (PGSVRLVAAFGLLLLVSLLVL) threads the bilayer. Over 32–713 (HRRPGRPHVA…PTNFSSLVTP (682 aa)) the chain is Extracellular. N-linked (GlcNAc...) asparagine glycans are attached at residues Asn-66 and Asn-311. The segment at 245-539 (ATSGAERLKF…EIWGLLALRL (295 aa)) is catalytic. The Zn(2+) site is built by His-345 and Asp-355. The active-site Nucleophile is Glu-392. Glu-393, Asp-421, and His-505 together coordinate Zn(2+). Residues Asn-667 and Asn-706 are each glycosylated (N-linked (GlcNAc...) asparagine).

It belongs to the peptidase M28 family. M28B subfamily. The cofactor is Zn(2+).

It localises to the cell membrane. The catalysed reaction is Release of an unsubstituted, C-terminal glutamyl residue, typically from Ac-Asp-Glu or folylpoly-gamma-glutamates.. Involved in the regulation of meristem development and seed maturation processes. Mediates regulation of embryonic regulatory genes and genes controlling abscisic acid (ABA) biosynthesis and turnover in developing seeds. May be required for the synthesis of small signaling molecules that integrates meristem and embryo formation in seeds. The chain is Probable glutamate carboxypeptidase VP8 from Zea mays (Maize).